Consider the following 152-residue polypeptide: ESAT-6 secretion machinery protein EssA (152 aa).

Topologically, residues 1-114 are cytoplasmic; sequence MLMNSVIALT…PYIQNKQEKK (114 aa). The disordered stretch occupies residues 62 to 83; it reads ERQQQIKNDMFQNQASHSTRLN. Residues 66–80 show a composition bias toward polar residues; sequence QIKNDMFQNQASHST. Residues 115–135 form a helical membrane-spanning segment; it reads IFPYILMSVGAFLTLGFVIFS. Topologically, residues 136–152 are extracellular; sequence IHKGRRTKNESARKSNI.

Belongs to the EssA family.

It is found in the cell membrane. In terms of biological role, component of the ESAT-6 secretion system (Ess). Required for the secretion of EsxA and EsxB. This Staphylococcus aureus (strain COL) protein is ESAT-6 secretion machinery protein EssA.